A 311-amino-acid polypeptide reads, in one-letter code: Malate dehydrogenase (311 aa).

Residues 7–13 (GAAGGIG) and Asp34 contribute to the NAD(+) site. Substrate-binding residues include Arg81 and Arg87. Residues Asn94 and 117-119 (ITN) each bind NAD(+). Residues Asn119 and Arg153 each contribute to the substrate site. The active-site Proton acceptor is His177. Met227 provides a ligand contact to NAD(+).

The protein belongs to the LDH/MDH superfamily. MDH type 1 family. As to quaternary structure, homodimer.

It carries out the reaction (S)-malate + NAD(+) = oxaloacetate + NADH + H(+). In terms of biological role, catalyzes the reversible oxidation of malate to oxaloacetate. The protein is Malate dehydrogenase of Shewanella amazonensis (strain ATCC BAA-1098 / SB2B).